A 625-amino-acid polypeptide reads, in one-letter code: UvrABC system protein C (625 aa).

The region spanning 13–92 is the GIY-YIG domain; the sequence is DKPGVYIMKD…IKKHRPKFNI (80 aa). The region spanning 204 to 239 is the UVR domain; it reads EDIIKKLEKDMKEAADNLEFERAARIRDKINSLKHI.

The protein belongs to the UvrC family. In terms of assembly, interacts with UvrB in an incision complex.

Its subcellular location is the cytoplasm. Its function is as follows. The UvrABC repair system catalyzes the recognition and processing of DNA lesions. UvrC both incises the 5' and 3' sides of the lesion. The N-terminal half is responsible for the 3' incision and the C-terminal half is responsible for the 5' incision. This is UvrABC system protein C from Acetivibrio thermocellus (strain ATCC 27405 / DSM 1237 / JCM 9322 / NBRC 103400 / NCIMB 10682 / NRRL B-4536 / VPI 7372) (Clostridium thermocellum).